The sequence spans 383 residues: Chorismate synthase (383 aa).

Arginine 39 and arginine 45 together coordinate NADP(+). FMN is bound by residues 128-130, glycine 291, 306-310, and arginine 332; these read RAS and KPIAT.

Belongs to the chorismate synthase family. As to quaternary structure, homotetramer. The cofactor is FMNH2.

The catalysed reaction is 5-O-(1-carboxyvinyl)-3-phosphoshikimate = chorismate + phosphate. It functions in the pathway metabolic intermediate biosynthesis; chorismate biosynthesis; chorismate from D-erythrose 4-phosphate and phosphoenolpyruvate: step 7/7. Functionally, catalyzes the anti-1,4-elimination of the C-3 phosphate and the C-6 proR hydrogen from 5-enolpyruvylshikimate-3-phosphate (EPSP) to yield chorismate, which is the branch point compound that serves as the starting substrate for the three terminal pathways of aromatic amino acid biosynthesis. This reaction introduces a second double bond into the aromatic ring system. The protein is Chorismate synthase of Thermus thermophilus (strain ATCC 27634 / DSM 579 / HB8).